A 184-amino-acid chain; its full sequence is Large ribosomal subunit protein uL6 (184 aa).

This sequence belongs to the universal ribosomal protein uL6 family. As to quaternary structure, part of the 50S ribosomal subunit.

Its function is as follows. This protein binds to the 23S rRNA, and is important in its secondary structure. It is located near the subunit interface in the base of the L7/L12 stalk, and near the tRNA binding site of the peptidyltransferase center. The sequence is that of Large ribosomal subunit protein uL6 from Thermomicrobium roseum (strain ATCC 27502 / DSM 5159 / P-2).